The chain runs to 276 residues: NAD-capped RNA hydrolase NudC (276 aa).

Residue R82 coordinates substrate. Residues C112 and C115 each contribute to the Zn(2+) site. Residue E125 coordinates substrate. Zn(2+) is bound by residues C130 and C133. A substrate-binding site is contributed by Y138. Residues 139–262 (PRISPSMIVL…SIARYLIDLY (124 aa)) form the Nudix hydrolase domain. Positions 172, 188, and 192 each coordinate a divalent metal cation. Positions 173-194 (GFAEPGESAEDCLVREVREEVA) match the Nudix box motif. 206–213 (QCWPFPHS) serves as a coordination point for substrate. Position 233 (E233) interacts with a divalent metal cation. A255 contributes to the substrate binding site.

Belongs to the Nudix hydrolase family. NudC subfamily. Homodimer. It depends on Mg(2+) as a cofactor. Mn(2+) is required as a cofactor. The cofactor is Zn(2+).

The catalysed reaction is a 5'-end NAD(+)-phospho-ribonucleoside in mRNA + H2O = a 5'-end phospho-adenosine-phospho-ribonucleoside in mRNA + beta-nicotinamide D-ribonucleotide + 2 H(+). It carries out the reaction NAD(+) + H2O = beta-nicotinamide D-ribonucleotide + AMP + 2 H(+). It catalyses the reaction NADH + H2O = reduced beta-nicotinamide D-ribonucleotide + AMP + 2 H(+). Functionally, mRNA decapping enzyme that specifically removes the nicotinamide adenine dinucleotide (NAD) cap from a subset of mRNAs by hydrolyzing the diphosphate linkage to produce nicotinamide mononucleotide (NMN) and 5' monophosphate mRNA. The NAD-cap is present at the 5'-end of some mRNAs and stabilizes RNA against 5'-processing. Has preference for mRNAs with a 5'-end purine. Catalyzes the hydrolysis of a broad range of dinucleotide pyrophosphates. This Pseudomonas putida (strain ATCC 700007 / DSM 6899 / JCM 31910 / BCRC 17059 / LMG 24140 / F1) protein is NAD-capped RNA hydrolase NudC.